The chain runs to 154 residues: Acidic phospholipase A2 2 (154 aa).

The N-terminal stretch at 1–19 (MHPAHLLVPLGVCVSLLGA) is a signal peptide. Positions 20–27 (ARIPPLPL) are excised as a propeptide. Intrachain disulfides connect C38/C104, C54/C153, C56/C72, C71/C132, C78/C125, C88/C118, and C111/C123. Y55, G57, and G59 together coordinate Ca(2+). The active site involves H75. Residue D76 participates in Ca(2+) binding. D126 is an active-site residue.

It belongs to the phospholipase A2 family. Group I subfamily. D49 sub-subfamily. In terms of assembly, monomer. Ca(2+) is required as a cofactor. In terms of tissue distribution, expressed by the venom gland.

Its subcellular location is the secreted. It carries out the reaction a 1,2-diacyl-sn-glycero-3-phosphocholine + H2O = a 1-acyl-sn-glycero-3-phosphocholine + a fatty acid + H(+). Snake venom phospholipase A2 (PLA2) that shows moderate enzymatic activity and exhibits procoagulant activity. PLA2 catalyzes the calcium-dependent hydrolysis of the 2-acyl groups in 3-sn-phosphoglycerides. In Pseudonaja textilis (Eastern brown snake), this protein is Acidic phospholipase A2 2.